The primary structure comprises 41 residues: U-theraphotoxin-Lk1a (41 aa).

Intrachain disulfides connect Cys1/Cys16, Cys8/Cys21, and Cys15/Cys36.

It belongs to the neurotoxin 14 (magi-1) family. 08 (Ltx-4) subfamily. As to expression, expressed by the venom gland.

The protein localises to the secreted. Toxin that causes irreversible contractile paralysis in adult Aedes aegypti resulting in 100% mortality after 24 hours. This is U-theraphotoxin-Lk1a from Lasiodora klugi (Bahia scarlet tarantula).